Consider the following 438-residue polypeptide: Phosphoribosylamine--glycine ligase (438 aa).

An ATP-grasp domain is found at 108–316 (REFMERNNIP…LLEIAKGIVE (209 aa)). 135–194 (IDEYGKPVVVKPLGLTGGKGVKVVGYQLKDNEEAKEYAEHIIRKDGKVLIEERTDGVEFT) lines the ATP pocket. Mg(2+) contacts are provided by glutamine 274, glutamate 286, and asparagine 288. Glutamine 274, glutamate 286, and asparagine 288 together coordinate Mn(2+).

It belongs to the GARS family. The cofactor is Mg(2+). Mn(2+) is required as a cofactor.

It catalyses the reaction 5-phospho-beta-D-ribosylamine + glycine + ATP = N(1)-(5-phospho-beta-D-ribosyl)glycinamide + ADP + phosphate + H(+). It functions in the pathway purine metabolism; IMP biosynthesis via de novo pathway; N(1)-(5-phospho-D-ribosyl)glycinamide from 5-phospho-alpha-D-ribose 1-diphosphate: step 2/2. The polypeptide is Phosphoribosylamine--glycine ligase (Pyrococcus horikoshii (strain ATCC 700860 / DSM 12428 / JCM 9974 / NBRC 100139 / OT-3)).